A 326-amino-acid polypeptide reads, in one-letter code: Glyoxylate/hydroxypyruvate reductase B (326 aa).

Catalysis depends on residues R237 and E266. Residue H285 is the Proton donor of the active site.

This sequence belongs to the D-isomer specific 2-hydroxyacid dehydrogenase family. GhrB subfamily. In terms of assembly, homodimer.

Its subcellular location is the cytoplasm. It carries out the reaction glycolate + NADP(+) = glyoxylate + NADPH + H(+). It catalyses the reaction (R)-glycerate + NAD(+) = 3-hydroxypyruvate + NADH + H(+). The catalysed reaction is (R)-glycerate + NADP(+) = 3-hydroxypyruvate + NADPH + H(+). In terms of biological role, catalyzes the NADPH-dependent reduction of glyoxylate and hydroxypyruvate into glycolate and glycerate, respectively. This is Glyoxylate/hydroxypyruvate reductase B from Yersinia pseudotuberculosis serotype O:3 (strain YPIII).